Here is a 95-residue protein sequence, read N- to C-terminus: Aspartyl/glutamyl-tRNA(Asn/Gln) amidotransferase subunit C (95 aa).

This sequence belongs to the GatC family. As to quaternary structure, heterotrimer of A, B and C subunits.

The enzyme catalyses L-glutamyl-tRNA(Gln) + L-glutamine + ATP + H2O = L-glutaminyl-tRNA(Gln) + L-glutamate + ADP + phosphate + H(+). The catalysed reaction is L-aspartyl-tRNA(Asn) + L-glutamine + ATP + H2O = L-asparaginyl-tRNA(Asn) + L-glutamate + ADP + phosphate + 2 H(+). Allows the formation of correctly charged Asn-tRNA(Asn) or Gln-tRNA(Gln) through the transamidation of misacylated Asp-tRNA(Asn) or Glu-tRNA(Gln) in organisms which lack either or both of asparaginyl-tRNA or glutaminyl-tRNA synthetases. The reaction takes place in the presence of glutamine and ATP through an activated phospho-Asp-tRNA(Asn) or phospho-Glu-tRNA(Gln). The chain is Aspartyl/glutamyl-tRNA(Asn/Gln) amidotransferase subunit C from Geotalea daltonii (strain DSM 22248 / JCM 15807 / FRC-32) (Geobacter daltonii).